We begin with the raw amino-acid sequence, 240 residues long: tRNA (guanine-N(1)-)-methyltransferase (240 aa).

S-adenosyl-L-methionine contacts are provided by residues Gly110 and 130 to 135; that span reads IGDYVL.

Belongs to the RNA methyltransferase TrmD family. Homodimer.

The protein localises to the cytoplasm. It catalyses the reaction guanosine(37) in tRNA + S-adenosyl-L-methionine = N(1)-methylguanosine(37) in tRNA + S-adenosyl-L-homocysteine + H(+). Functionally, specifically methylates guanosine-37 in various tRNAs. This is tRNA (guanine-N(1)-)-methyltransferase from Macrococcus caseolyticus (strain JCSC5402) (Macrococcoides caseolyticum).